We begin with the raw amino-acid sequence, 309 residues long: Probable lipid kinase YegS-like (309 aa).

The DAGKc domain occupies 1-133 (MPLTHIRLLL…IDIIRANNNY (133 aa)). ATP is bound by residues Ser39, 65 to 71 (GDGSLNE), and Thr95. Leu214, Asp217, and Leu219 together coordinate Mg(2+). The active-site Proton acceptor is Glu273.

It belongs to the diacylglycerol/lipid kinase family. YegS lipid kinase subfamily. It depends on Mg(2+) as a cofactor. Ca(2+) is required as a cofactor.

It localises to the cytoplasm. Probably phosphorylates lipids; the in vivo substrate is unknown. This chain is Probable lipid kinase YegS-like, found in Shewanella frigidimarina (strain NCIMB 400).